The following is a 575-amino-acid chain: uncharacterized protein (575 aa).

The N-terminal stretch at 1-28 is a signal peptide; that stretch reads MSNLLWKSLVVSPAVLGATLLVSSAAIA. The region spanning 87–151 is the SLH domain; that stretch reads SVSQFSDVQP…DRVNELIATA (65 aa). Residues 158–196 are a coiled coil; sequence KQDLATLQRLQEEFSAELATLRGRVDALEARTAELEANQ.

Belongs to the OprB family.

This is an uncharacterized protein from Nostoc sp. (strain PCC 7120 / SAG 25.82 / UTEX 2576).